The primary structure comprises 451 residues: Coproporphyrinogen III oxidase (451 aa).

FAD-binding positions include 10–15, 36–37, 58–61, valine 242, tryptophan 393, and 429–431; these read GGGISG, DP, GAEA, and IGV.

Belongs to the protoporphyrinogen/coproporphyrinogen oxidase family. Coproporphyrinogen III oxidase subfamily. The cofactor is FAD.

It localises to the cytoplasm. The enzyme catalyses coproporphyrinogen III + 3 O2 = coproporphyrin III + 3 H2O2. It functions in the pathway porphyrin-containing compound metabolism; protoheme biosynthesis. Functionally, involved in coproporphyrin-dependent heme b biosynthesis. Catalyzes the oxidation of coproporphyrinogen III to coproporphyrin III. In Mycobacterium leprae (strain TN), this protein is Coproporphyrinogen III oxidase.